The sequence spans 238 residues: HTH-type transcriptional regulator TreR (238 aa).

An HTH gntR-type domain is found at 1 to 71; sequence MKVNKFITIY…RGKGSVVLNR (71 aa). Positions 31 to 50 form a DNA-binding region, H-T-H motif; the sequence is EHELTAQYGTSRETVRKALH.

Dimer of dimers.

Functionally, repressor for the trePA operon. It is able to bind trehalose-6-phosphate. The polypeptide is HTH-type transcriptional regulator TreR (treR) (Bacillus subtilis (strain 168)).